The following is a 1184-amino-acid chain: MDPKDESAHVWPTSADHEQSTAQVHFVPDAGTVAQIVYTDDQVRPPQQVVYTADGASYTSVDGPEHTLVYIHPVEAAQTLFTDPAQVAYVQQDATAQQVLPSIESVHGSDPLATLQNPIARLDAKEEEEEEEDEDEDTEEEEEEDAEDTDVDDWQPDPPRPFDPHDLWCEECNNAHSSVCPKHGPLHPIPNRPVLTRARASLPLVLYIDRFLGGVFSKRRIPKRTQFGPVEGPLVRGSELKDCYIHLKVSLDKGDRKDRDLHEDLWFELSDETLCNWMMFVRPAQNHLEQNLVAYQYGHHVYYTTIKNVEPKQELKVWYAASYAEFVNQKIHDISEEERKVLREQEKNWPCYECNRRFISSEQLQQHLNSHDEKLDVFTRTRGRGRGRGKRRFGPGRRPGRPPKFIRLEITSENGEKSDDGTQDLLHFPTKEQFDEAEPATLNGLDQPEQASIPIPQLPQETPPSLEQEPETHTLHLQPQQEESLVPTQTTLTADDMRRAKRIRNAALQHLFIRKSFRPFKCLQCGKAFREKDKLDQHLRFHGREGNCPLTCDLCNKGFISSASLESHMKLHSDQKTYSCIFCPESFDRLDLLKDHVAIHVNDGCFTCPTCKKRFPDFIQVKKHVRSFHSEKIYQCTECDKAFCRPDKLRLHMLRHSDRKDFLCSTCGKQFKRKDKLREHMQRMHNPEREAKKADRISRSKTFKPRITSTDYDSFTFKCRLCMMGFRRRGMLVNHLSKRHPDMKIEEVPELTLPIIKPNRDYFCQYCDKNEMSYFALSKKVALYIAFMVKYLTLQVYKSASKRKAHILKNHPGAELPPSIRKLRPAGPGEPDPMLSTHTQLTGTIATPPVCCPHCSKQYSSKTKMVQHIRKKHPEYAQLPNTIHTPLTTAVISATPAVLTTDSATGETVVTTDLLTQAMTELSQTLTTDYRTPQGDYQRIQYIPVSQSASGLQQPQHIQLQVVQVAPATSPHQSQQSTVDVGQLHDPQTYTQHAIQVQHIQVTEPAPAAPSASQVAGQPLSPSAQQVQQGLSPSHIQGSSSTQGQALQQQQNSSVQHTYLPNAWNSFRGYSAVSAGDTSHESASEIQMMTLPPGQFVITDSGVATPVTSGQVKAVTPGHYVLSESQPELEEKQASALSGAVQVQPSAHSDSLDSTGPSQQQTTQYIITTTTNGNGGSEVHITKP.

Positions 122–162 are disordered; sequence LDAKEEEEEEEDEDEDTEEEEEEDAEDTDVDDWQPDPPRPF. Residues 125 to 155 are compositionally biased toward acidic residues; the sequence is KEEEEEEEDEDEDTEEEEEEDAEDTDVDDWQ. Residues 202–320 form the SET domain; it reads LPLVLYIDRF…PKQELKVWYA (119 aa). Residues 221-325 form an N-terminal PR domain; essential for transcriptional activator activity region; the sequence is IPKRTQFGPV…KVWYAASYAE (105 aa). The C2H2-type 1 zinc finger occupies 349 to 371; sequence WPCYECNRRFISSEQLQQHLNSH. A Glycyl lysine isopeptide (Lys-Gly) (interchain with G-Cter in SUMO2) cross-link involves residue Lys-374. Basic residues predominate over residues 381 to 401; the sequence is TRGRGRGRGKRRFGPGRRPGR. Residues 381-405 are disordered; the sequence is TRGRGRGRGKRRFGPGRRPGRPPKF. Phosphoserine is present on Ser-418. Position 422 is a phosphothreonine (Thr-422). The disordered stretch occupies residues 444–487; that stretch reads GLDQPEQASIPIPQLPQETPPSLEQEPETHTLHLQPQQEESLVP. Positions 475–487 are enriched in polar residues; the sequence is LHLQPQQEESLVP. 8 consecutive C2H2-type zinc fingers follow at residues 520–542, 550–572, 578–600, 606–629, 634–656, 662–685, 717–740, and 850–873; these read FKCL…LRFH, LTCD…MKLH, YSCI…VAIH, FTCP…RSFH, YQCT…MLRH, FLCS…QRMH, FKCR…SKRH, and VCCP…RKKH. A C-terminal glutamine-rich region; essential for transcriptional activator activity region spans residues 917–1164; it reads QAMTELSQTL…TGPSQQQTTQ (248 aa). Positions 1004 to 1054 are disordered; the sequence is EPAPAAPSASQVAGQPLSPSAQQVQQGLSPSHIQGSSSTQGQALQQQQNSS. Positions 1014-1036 are enriched in polar residues; the sequence is QVAGQPLSPSAQQVQQGLSPSHI. Residues 1037–1054 are compositionally biased toward low complexity; it reads QGSSSTQGQALQQQQNSS.

The protein belongs to the class V-like SAM-binding methyltransferase superfamily. As to expression, present in brain, liver, kidney, spleen and thymus (at protein level).

Its subcellular location is the nucleus. Transcriptional activator, essential for early embryonic development and survival of embryonic stem cells (ESCs). Supports cell growth and survival during early development by transcriptionally activating the expression of the translation initiation factor EIF3B, to sustain global translation. Activates the transcription of FLNC. The polypeptide is PR domain zinc finger protein 10 (Prdm10) (Mus musculus (Mouse)).